The chain runs to 648 residues: Transcription termination factor FttA (648 aa).

The interval 1–179 (MIKRETQVDQ…QVGRNIYRKP (179 aa)) is not required for dimerization, required for cleavage at some sites. Residues 9-76 (DQILKDIRGI…ISIRPDPDVL (68 aa)) form a KHa region. Residues 77–144 (LPPEEAEKLI…WAPKVVRTPP (68 aa)) form a KHb region. The segment at 185–395 (WIRITGLGGF…LVMESTYGGA (211 aa)) is metallo-beta-lactamase N-terminus. Zn(2+) contacts are provided by H253, H255, D257, H258, H341, and D364. Residues 396-589 (NDIQMPREEA…MEVHTIDGFS (194 aa)) form a beta-Casp region. Positions 590–648 (GHADRRELMNYVAKVRPRPERVITVHGEPQKCLDLATSIHRKFGLSTRAPNNLDTIRLR) are metallo-beta-lactamase C-terminus. A Zn(2+)-binding site is contributed by H615.

This sequence belongs to the metallo-beta-lactamase superfamily. RNA-metabolizing metallo-beta-lactamase-like family. FttA subfamily. Homodimer. Interacts with RNA polymerase (RNAP), interacts with the Spt4-Spt5 complex. Zn(2+) is required as a cofactor.

EndoRNase activity is inhibited by 1,10-phenanthroline. Its function is as follows. Terminates transcription on the whole genome. Termination is linked to FttA-mediated RNA cleavage and does not require NTP hydrolysis. Cleaves endonucleolytically at the RNA exit channel of RNA polymerase (RNAP); the 5'-3' exonuclease activity of this protein degrades the nascent RNA released from RNAP. A single-stranded endoribonuclease (endoRNase) with a preference for cleavage at CA dinucleotides. Has 5'-3' exoribonuclease (exoRNase) activity on 5'-monophosphorylated RNA; this activity does not occur on 5'-tri-phosphorylated or 5'-OH substrates. Also has weak activity 5'-3' exodeoxyribonuclease activity on ssDNA. In Pyrococcus abyssi (strain GE5 / Orsay), this protein is Transcription termination factor FttA.